Reading from the N-terminus, the 83-residue chain is Pigment-dispersing hormone peptides (83 aa).

Residues 1-24 (MRFIILGVLFIAVASMILSNGVMA) form the signal peptide. Ala-80 is subject to Alanine amide.

It belongs to the arthropod PDH family. In terms of tissue distribution, strongly expressed in eyestalk tissue and cerebral ganglia (at protein level).

Its subcellular location is the secreted. Its function is as follows. The pigment-dispersing hormone causes the migration of the distal retinal pigment into the proximal end of the pigment chromatophore cells and thus decreases the amount of light entering the retinulas. May also function as a neurotransmitter and/or neuromodulator. This Eurydice pulchra (Speckled sea louse) protein is Pigment-dispersing hormone peptides.